The chain runs to 325 residues: MALRRVLLFVKPFDVYPPRPLAAAASSPPPPPPPLRVSNPKVLNYLDDRCRVHKETINLCKSVLQRKSIDWISVQRNDMSNPIHDVDLVISVGGDGTLLRASHFLNSSIPVLGVNSDPTCPDEVDELTDEFDARRSTGHLCAATAANFEQILDATLDGSRQPSELSRISVKLNGLQLPTYALNDILVSHPCPASVSRFSFRKRSNTGESSHLINCRSSGLRVATPAGSTAAMLSAGGFVMPISSHELQYMIREPISPRDADKPLLHGLVKQGQHILVVWYNEEGAVYFDGSHVMHSIQHGDTLEISSDAPILKVILPENLLKQGS.

The protein belongs to the NAD kinase family. As to quaternary structure, homodimer.

The protein localises to the cytoplasm. The enzyme catalyses NADH + ATP = ADP + NADPH + H(+). Functionally, key source of the cellular reductant NADPH which is an important antioxidant factor. This Oryza sativa subsp. japonica (Rice) protein is Probable NADH kinase.